A 504-amino-acid chain; its full sequence is Glucose-6-phosphate isomerase (504 aa).

The Proton donor role is filled by Glu333. Residues His364 and Lys473 contribute to the active site.

Belongs to the GPI family.

The protein localises to the cytoplasm. The enzyme catalyses alpha-D-glucose 6-phosphate = beta-D-fructose 6-phosphate. It participates in carbohydrate biosynthesis; gluconeogenesis. It functions in the pathway carbohydrate degradation; glycolysis; D-glyceraldehyde 3-phosphate and glycerone phosphate from D-glucose: step 2/4. Functionally, catalyzes the reversible isomerization of glucose-6-phosphate to fructose-6-phosphate. In Xanthomonas campestris pv. campestris (strain B100), this protein is Glucose-6-phosphate isomerase.